A 270-amino-acid chain; its full sequence is Glutamate 5-kinase (270 aa).

An ATP-binding site is contributed by Lys-18. Substrate-binding residues include Ser-54, Asp-141, and Asn-153. 173 to 174 serves as a coordination point for ATP; it reads SD.

Belongs to the glutamate 5-kinase family.

The protein localises to the cytoplasm. It catalyses the reaction L-glutamate + ATP = L-glutamyl 5-phosphate + ADP. Its pathway is amino-acid biosynthesis; L-proline biosynthesis; L-glutamate 5-semialdehyde from L-glutamate: step 1/2. Its function is as follows. Catalyzes the transfer of a phosphate group to glutamate to form L-glutamate 5-phosphate. The polypeptide is Glutamate 5-kinase (Leifsonia xyli subsp. xyli (strain CTCB07)).